The primary structure comprises 162 residues: Blue copper protein 1b (162 aa).

Positions 1–23 (MASSRVVLILSISMVLLSSVAIA) are cleaved as a signal peptide. A Phytocyanin domain is found at 25-125 (TDYIVGDDKG…QMKLVITVLA (101 aa)). His65 contacts Cu cation. An N-linked (GlcNAc...) asparagine glycan is attached at Asn71. A disulfide bridge connects residues Cys78 and Cys112. Residues Cys106, His111, and Met117 each contribute to the Cu cation site. A helical transmembrane segment spans residues 142–162 (VVSSLFGVVMAIMVAIAVIFA).

Its subcellular location is the membrane. In Medicago truncatula (Barrel medic), this protein is Blue copper protein 1b.